We begin with the raw amino-acid sequence, 37 residues long: Chitinase-like protein (37 aa).

Residues 1–20 (VLLSVGGDADTESPEKKNLG) form a disordered region. Positions 1–37 (VLLSVGGDADTESPEKKNLGGVSIVDLSMDDFRGLLT) constitute a GH18 domain.

It belongs to the glycosyl hydrolase 18 family. IDGF subfamily. Glycosylated.

The protein localises to the secreted. Functionally, cooperates with insulin-like peptides to stimulate the proliferation, polarization and motility of imaginal disk cells. May act by stabilizing the binding of insulin-like peptides to its receptor through a simultaneous interaction with both molecules to form a multiprotein signaling complex. This chain is Chitinase-like protein, found in Heliothis virescens (Tobacco budworm moth).